The sequence spans 136 residues: MAALRYRRFLKLCEEWPVDETKRGRDLGAYLRQRVAQAFREGENTQVAEPEACDQMYESLARLHSNYYKHKYPRPRDTSFSGLSVEEYKLILSTDTLEEFQEMNKSVWRKLQEKFAPTRPEEKHRAWTRVLSRPRT.

Residues 1–13 (MAALRYRRFLKLC) constitute a mitochondrion transit peptide.

As to quaternary structure, interacts with UQCC1.

The protein resides in the mitochondrion matrix. The protein localises to the mitochondrion nucleoid. It is found in the mitochondrion. It localises to the mitochondrion intermembrane space. Its subcellular location is the mitochondrion inner membrane. In terms of biological role, required for the assembly of the ubiquinol-cytochrome c reductase complex (mitochondrial respiratory chain complex III or cytochrome b-c1 complex). Plays a role in the modulation of respiratory chain activities such as oxygen consumption and ATP production and via its modulation of the respiratory chain activity can regulate skeletal muscle differentiation and insulin secretion by pancreatic beta-cells. Involved in cytochrome b translation and/or stability. The polypeptide is Ubiquinol-cytochrome-c reductase complex assembly factor 2 (Uqcc2) (Rattus norvegicus (Rat)).